The chain runs to 187 residues: uncharacterized protein (187 aa).

Positions 42–63 are disordered; that stretch reads RTNGPGKDSFSFSTSGSKPSSS. Residues 50–63 show a composition bias toward low complexity; sequence SFSFSTSGSKPSSS.

This is an uncharacterized protein from Saccharomyces cerevisiae (strain ATCC 204508 / S288c) (Baker's yeast).